We begin with the raw amino-acid sequence, 638 residues long: DNA mismatch repair protein MutL (638 aa).

Residues 398–435 are disordered; sequence GREGTSFGTQTNAFGSMATPRDNSRGSYSAGESRQRTE.

Belongs to the DNA mismatch repair MutL/HexB family.

This protein is involved in the repair of mismatches in DNA. It is required for dam-dependent methyl-directed DNA mismatch repair. May act as a 'molecular matchmaker', a protein that promotes the formation of a stable complex between two or more DNA-binding proteins in an ATP-dependent manner without itself being part of a final effector complex. This chain is DNA mismatch repair protein MutL, found in Shewanella baltica (strain OS155 / ATCC BAA-1091).